A 113-amino-acid polypeptide reads, in one-letter code: Iron-sulfur cluster insertion protein ErpA (113 aa).

Iron-sulfur cluster-binding residues include cysteine 41, cysteine 105, and cysteine 107.

It belongs to the HesB/IscA family. In terms of assembly, homodimer. It depends on iron-sulfur cluster as a cofactor.

Required for insertion of 4Fe-4S clusters for at least IspG. The sequence is that of Iron-sulfur cluster insertion protein ErpA from Aliivibrio fischeri (strain ATCC 700601 / ES114) (Vibrio fischeri).